We begin with the raw amino-acid sequence, 509 residues long: Meiotically up-regulated gene 157 protein (509 aa).

A run of 5 helical transmembrane segments spans residues tryptophan 4 to tryptophan 24, leucine 140 to tyrosine 160, alanine 296 to leucine 316, isoleucine 368 to valine 388, and isoleucine 417 to valine 437.

The protein localises to the endoplasmic reticulum membrane. Has a role in meiosis. The sequence is that of Meiotically up-regulated gene 157 protein (mug157) from Schizosaccharomyces pombe (strain 972 / ATCC 24843) (Fission yeast).